A 307-amino-acid chain; its full sequence is Leucine-rich repeat-containing protein 25 (307 aa).

Residues 1-20 (MGGPLMWALLLPLLLHQAGS) form the signal peptide. The Extracellular segment spans residues 21–168 (QTSSCSVLSG…SCPSGLTKIA (148 aa)). 2 N-linked (GlcNAc...) asparagine glycosylation sites follow: N44 and N56. 2 LRR repeats span residues 63–86 (SVQL…RDLE) and 87–110 (QLQL…XXGC). Residues N95, N132, and N151 are each glycosylated (N-linked (GlcNAc...) asparagine). Residues 169 to 189 (IGALAASGSLLLVLAIAGPVL) form a helical membrane-spanning segment. Over 190–307 (AWRFCRHRMD…DDEEYVVPGR (118 aa)) the chain is Cytoplasmic. The tract at residues 205–249 (TWASQDGSRSGSGRQPRYSSQGRRPKSPANTPPRSSTPDYENVFV) is disordered. A compositionally biased stretch (low complexity) spans 211-226 (GSRSGSGRQPRYSSQG). The span at 232–243 (PANTPPRSSTPD) shows a compositional bias: polar residues. The residue at position 286 (Y286) is a Phosphotyrosine.

As to quaternary structure, interacts with RIGI. Interacts with SQSTM1. Interacts with p65/RELA; this interaction promotes the degradation of RELA through autophagy.

The protein resides in the membrane. It localises to the cytoplasm. Plays a role in the inhibition of RLR-mediated type I interferon signaling pathway by targeting RIGI for autophagic degradation. Interacts specifically with ISG15-associated RIGI to promote interaction between RIGI and the autophagic cargo receptor p62/SQSTM1 to mediate RIGI degradation via selective autophagy. Plays also a role in the inhibition of NF-kappa-B signaling pathway and inflammatory response by promoting the degradation of p65/RELA. The polypeptide is Leucine-rich repeat-containing protein 25 (LRRC25) (Bos taurus (Bovine)).